We begin with the raw amino-acid sequence, 920 residues long: Zinc finger MIZ domain-containing protein 2 (920 aa).

Disordered regions lie at residues 1–22 (MNSM…GSFA) and 54–79 (SQVL…VAGG). Residues 60–79 (PMGPAGSPSGSSMMPGVAGG) are compositionally biased toward low complexity. Position 111 is an omega-N-methylarginine (Arg-111). 2 disordered regions span residues 243 to 265 (GQRL…RQGV) and 286 to 391 (PSTA…SPNQ). Asymmetric dimethylarginine occurs at positions 245 and 262. Residues 295–304 (PGQPPAPSPS) show a composition bias toward pro residues. Residues 334-354 (EQFNGQGASFNGGSVSYSQPG) show a composition bias toward polar residues. Positions 366–379 (PSSPLPGNPTPPMT) are enriched in pro residues. A compositionally biased stretch (low complexity) spans 380–389 (PSSSVPYMSP). Glycyl lysine isopeptide (Lys-Gly) (interchain with G-Cter in SUMO2) cross-links involve residues Lys-402 and Lys-457. Positions 435–506 (PFRLQHNLAV…TIERGDNKTS (72 aa)) are interaction with AR. The segment at 585–671 (GEDGVEQTAI…IYIQNSDYEE (87 aa)) adopts an SP-RING-type zinc-finger fold. Zn(2+) contacts are provided by Cys-616, His-618, Cys-639, and Cys-642. A Glycyl lysine isopeptide (Lys-Gly) (interchain with G-Cter in SUMO2) cross-link involves residue Lys-692. The segment at 803 to 920 (SQMAPAGHLD…DDLLSLFENN (118 aa)) is disordered. Residues 876-890 (AGEAPEPALDLLPEL) show a composition bias toward low complexity. Positions 906 to 920 (PTNNNDDLLSLFENN) are enriched in polar residues.

Interacts with AR, SMARCA4/BRG1 and SMARCE1/BAF57. Interaction with either SMARCA4 and SMARCE1 enhances AR-mediated transcription. As to expression, expressed most abundantly in testis with lower levels in heart, brain, pancreas, prostate and ovary.

It is found in the nucleus. Functionally, increases ligand-dependent transcriptional activity of AR and other nuclear hormone receptors. The chain is Zinc finger MIZ domain-containing protein 2 (ZMIZ2) from Homo sapiens (Human).